We begin with the raw amino-acid sequence, 1855 residues long: Chitin synthase 5 (1855 aa).

One can recognise a Myosin motor domain in the interval 1 to 778 (MSSAPTTQQN…CWRQIVRAGD (778 aa)). 95-102 (GESGTGKT) contributes to the ATP binding site. Residues N221, N520, and N558 are each glycosylated (N-linked (GlcNAc...) asparagine). Positions 585–650 (AVQQASVASK…PKSADTQQGA (66 aa)) are disordered. The interval 658-682 (LDNINKSLTAPNTNPYFFFCLKPND) is actin-binding. The N-linked (GlcNAc...) asparagine glycan is linked to N662. 2 helical membrane passes run 887–907 (WLVLVYVLTWWCPDWAIRIIG) and 922–942 (VAINFIIWLSCAFVVFFMVGF). Positions 950-1008 (QHVFSPSELTSYDGKNSDAYVAIRGNVFDLGAFIPQHYPSIVPASALEKYAGTDATNLF) constitute a Cytochrome b5 heme-binding domain. Residues N1037 and N1061 are each glycosylated (N-linked (GlcNAc...) asparagine). The chain crosses the membrane as a helical span at residues 1199 to 1219 (ILLAVSIMLVSVICFKFLAAL). N1422, N1456, and N1562 each carry an N-linked (GlcNAc...) asparagine glycan. 3 helical membrane-spanning segments follow: residues 1587–1607 (FVVFLDLLSTIVQPVIVGYIV), 1621–1641 (ATTAFILIAAIYGLQAIIFIV), and 1650–1670 (WMIIYILATPIFSFCLPLIAF). N-linked (GlcNAc...) asparagine glycosylation is found at N1755 and N1767. The 56-residue stretch at 1797-1852 (MPNDDAILAEIREILATADLMTVTKKSIKAELERRFGVPMDSRRQYIGSATEAILS) folds into the DEK-C domain.

This sequence in the N-terminal section; belongs to the TRAFAC class myosin-kinesin ATPase superfamily. Myosin family. The protein in the C-terminal section; belongs to the chitin synthase family. Class V subfamily.

The protein localises to the apical cell membrane. The protein resides in the cell septum. It localises to the cell tip. The catalysed reaction is [(1-&gt;4)-N-acetyl-beta-D-glucosaminyl](n) + UDP-N-acetyl-alpha-D-glucosamine = [(1-&gt;4)-N-acetyl-beta-D-glucosaminyl](n+1) + UDP + H(+). In terms of biological role, polymerizes chitin, a structural polymer of the cell wall and septum, by transferring the sugar moiety of UDP-GlcNAc to the non-reducing end of the growing chitin polymer. This chain is Chitin synthase 5, found in Zymoseptoria tritici (strain CBS 115943 / IPO323) (Speckled leaf blotch fungus).